The chain runs to 170 residues: MALSTPKTLMDFFQPAKRLKASPSSSSSFPAVSVAGRSRDLGSVANSPPRVTVTTAVADDSSGLTPEQVARAEFHKFVAKSKSNLAVCSVKVTKAKGLILIMDLVKLWVYPSMCLKEKSPSSLLNIFKELHKDVGDKLHMVYFRRNKKENVSHVTSLAVEDVTGITRTKG.

The N-terminal 53 residues, 1–53, are a transit peptide targeting the mitochondrion; the sequence is MALSTPKTLMDFFQPAKRLKASPSSSSSFPAVSVAGRSRDLGSVANSPPRVTV.

Belongs to the uracil-DNA glycosylase (UDG) superfamily. UNG family.

The protein resides in the mitochondrion. Functionally, probable inactive paralog of AtUNG (AC Q9LIH6) generated by a gene duplication event and subsequently disrupted by at least two transposon insertions. This chain is Probable inactive uracil-DNA glycosylase, mitochondrial, found in Arabidopsis thaliana (Mouse-ear cress).